A 121-amino-acid polypeptide reads, in one-letter code: Large ribosomal subunit protein uL14c (121 aa).

It belongs to the universal ribosomal protein uL14 family. In terms of assembly, part of the 50S ribosomal subunit.

Its subcellular location is the plastid. It is found in the organellar chromatophore. Binds to 23S rRNA. The sequence is that of Large ribosomal subunit protein uL14c from Paulinella chromatophora.